We begin with the raw amino-acid sequence, 487 residues long: N-succinylglutamate 5-semialdehyde dehydrogenase (487 aa).

221–226 (GSSDTG) serves as a coordination point for NAD(+). Residues glutamate 244 and cysteine 278 contribute to the active site.

It belongs to the aldehyde dehydrogenase family. AstD subfamily.

It carries out the reaction N-succinyl-L-glutamate 5-semialdehyde + NAD(+) + H2O = N-succinyl-L-glutamate + NADH + 2 H(+). The protein operates within amino-acid degradation; L-arginine degradation via AST pathway; L-glutamate and succinate from L-arginine: step 4/5. Its function is as follows. Catalyzes the NAD-dependent reduction of succinylglutamate semialdehyde into succinylglutamate. This is N-succinylglutamate 5-semialdehyde dehydrogenase from Burkholderia thailandensis (strain ATCC 700388 / DSM 13276 / CCUG 48851 / CIP 106301 / E264).